Consider the following 229-residue polypeptide: 5'-methylthioadenosine/S-adenosylhomocysteine nucleosidase (229 aa).

Glutamate 12 acts as the Proton acceptor in catalysis. Substrate contacts are provided by residues glycine 78, isoleucine 152, and 173–174 (ME). Aspartate 197 serves as the catalytic Proton donor.

It belongs to the PNP/UDP phosphorylase family. MtnN subfamily.

The enzyme catalyses S-adenosyl-L-homocysteine + H2O = S-(5-deoxy-D-ribos-5-yl)-L-homocysteine + adenine. The catalysed reaction is S-methyl-5'-thioadenosine + H2O = 5-(methylsulfanyl)-D-ribose + adenine. It catalyses the reaction 5'-deoxyadenosine + H2O = 5-deoxy-D-ribose + adenine. The protein operates within amino-acid biosynthesis; L-methionine biosynthesis via salvage pathway; S-methyl-5-thio-alpha-D-ribose 1-phosphate from S-methyl-5'-thioadenosine (hydrolase route): step 1/2. In terms of biological role, catalyzes the irreversible cleavage of the glycosidic bond in both 5'-methylthioadenosine (MTA) and S-adenosylhomocysteine (SAH/AdoHcy) to adenine and the corresponding thioribose, 5'-methylthioribose and S-ribosylhomocysteine, respectively. Also cleaves 5'-deoxyadenosine, a toxic by-product of radical S-adenosylmethionine (SAM) enzymes, into 5-deoxyribose and adenine. The polypeptide is 5'-methylthioadenosine/S-adenosylhomocysteine nucleosidase (Haemophilus influenzae (strain PittEE)).